The primary structure comprises 244 residues: 1-(5-phosphoribosyl)-5-[(5-phosphoribosylamino)methylideneamino] imidazole-4-carboxamide isomerase (244 aa).

The Proton acceptor role is filled by aspartate 10. Aspartate 129 serves as the catalytic Proton donor.

Belongs to the HisA/HisF family.

It is found in the cytoplasm. It catalyses the reaction 1-(5-phospho-beta-D-ribosyl)-5-[(5-phospho-beta-D-ribosylamino)methylideneamino]imidazole-4-carboxamide = 5-[(5-phospho-1-deoxy-D-ribulos-1-ylimino)methylamino]-1-(5-phospho-beta-D-ribosyl)imidazole-4-carboxamide. It functions in the pathway amino-acid biosynthesis; L-histidine biosynthesis; L-histidine from 5-phospho-alpha-D-ribose 1-diphosphate: step 4/9. This is 1-(5-phosphoribosyl)-5-[(5-phosphoribosylamino)methylideneamino] imidazole-4-carboxamide isomerase from Rhodococcus erythropolis (strain PR4 / NBRC 100887).